A 317-amino-acid polypeptide reads, in one-letter code: Small ribosomal subunit protein uS2 (317 aa).

Disordered stretches follow at residues 1–30 and 293–317; these read MENENLKVEQATTAENNMAEKADDSKASKE and RSFEQNSAEGVKTVEKTTTSTEVAE. The segment covering 18–30 has biased composition (basic and acidic residues); the sequence is MAEKADDSKASKE. Residues 308–317 are compositionally biased toward low complexity; it reads KTTTSTEVAE.

Belongs to the universal ribosomal protein uS2 family.

This chain is Small ribosomal subunit protein uS2, found in Mycoplasmopsis agalactiae (strain NCTC 10123 / CIP 59.7 / PG2) (Mycoplasma agalactiae).